We begin with the raw amino-acid sequence, 351 residues long: Cardiolipin synthase (CMP-forming) (351 aa).

A disordered region spans residues 74 to 120 (PAPQLSASHQHQAQQQQQQTKQPQQPYDPQQDQVPSTSTASSSKPAA). The segment covering 76–120 (PQLSASHQHQAQQQQQQTKQPQQPYDPQQDQVPSTSTASSSKPAA) has biased composition (low complexity). 5 consecutive transmembrane segments (helical) span residues 139–159 (PLIGYWLVQGHYEAATLALAV), 191–211 (VLIGCVAAALLMNGAMPGWVA), 251–271 (AAAAGAATGAANGVASGGGGG), 280–300 (PLLISKANTVLQLLLLGGYLL), and 321–341 (LIMGLELATAATTVASGLAYG).

Belongs to the CDP-alcohol phosphatidyltransferase class-I family. Mn(2+) is required as a cofactor.

The protein localises to the mitochondrion inner membrane. The catalysed reaction is a CDP-1,2-diacyl-sn-glycerol + a 1,2-diacyl-sn-glycero-3-phospho-(1'-sn-glycerol) = a cardiolipin + CMP + H(+). Functionally, catalyzes the synthesis of cardiolipin (CL) (diphosphatidylglycerol) by specifically transferring a phosphatidyl group from CDP-diacylglycerol to phosphatidylglycerol (PG). CL is a key phospholipid in mitochondrial membranes and plays important roles in maintaining the functional integrity and dynamics of mitochondria under both optimal and stress conditions. Cannot catalyze the phosphatidyl group transfer from one PG molecule to another to form CL. The sequence is that of Cardiolipin synthase (CMP-forming) from Chlamydomonas reinhardtii (Chlamydomonas smithii).